A 2269-amino-acid polypeptide reads, in one-letter code: Neuron navigator 3 (2269 aa).

In terms of domain architecture, Calponin-homology (CH) spans 55-162 (SKICKIYTDW…LFFILSRYKQ (108 aa)). Polar residues predominate over residues 186-207 (TGAAQLSQHKTQDMQSSLTARY). Disordered regions lie at residues 186–358 (TGAA…RSML) and 388–532 (SEFG…NKGS). A compositionally biased stretch (low complexity) spans 236–252 (GSGSNSSKGSSNLNRRS). 2 stretches are compositionally biased toward polar residues: residues 267–291 (ASGNDRGSMNGSGSVPSSTSGQQLA) and 305–319 (SKSMNMKHSATSSML). Positions 323–333 (PPSPTSSPTPP) are enriched in pro residues. A compositionally biased stretch (polar residues) spans 346–356 (ASKSAPGNQRS). The segment covering 411-432 (PSASAFAPPSKSNNCKNHNNKS) has biased composition (low complexity). Polar residues predominate over residues 505-518 (TATSKPAGTQSCVP). A coiled-coil region spans residues 644 to 672 (ETRRMRTVKNIADLRQNLEETMSSLRGTQ). Disordered stretches follow at residues 692-737 (GRGL…STTV), 756-776 (ASGARGAEPGEKGGISEVGPE), 836-1036 (VKEM…IPGP), 1050-1079 (SGSATLGKVPKSACIGKSTGISNGRKTSLD), 1097-1412 (VPLQ…GTTC), and 1461-1487 (GGSATSLEERPRGMSRSGSFRDSTDEV). Polar residues-rich tracts occupy residues 699–716 (SSRSSPMSWRLGQGSSPR) and 727–737 (PPRSSAGSTTV). The span at 847 to 860 (DSSSVSSGLSDTLD) shows a compositional bias: low complexity. Residues 874–886 (GISSRKSKAAQSN) are compositionally biased toward polar residues. The segment covering 919–932 (PSCKWKTSSPSSSC) has biased composition (low complexity). The span at 939–950 (QKTGLPMSQTGS) shows a compositional bias: polar residues. The segment covering 977–989 (GKTDDAKASEKGK) has biased composition (basic and acidic residues). A compositionally biased stretch (low complexity) spans 1110–1137 (SSSGGSSVVSRSGHRSSSSSIDSNVSGK). Residues 1163 to 1172 (GRSSPVTINQ) are compositionally biased toward polar residues. 2 stretches are compositionally biased toward low complexity: residues 1185 to 1202 (GTGLPTSPKSSPTSTQSG) and 1223 to 1234 (GSKASSKPSSPG). Positions 1266–1276 (GSLGSMGGQSG) are enriched in gly residues. A compositionally biased stretch (low complexity) spans 1292–1305 (SPASSPASGLSLPS). Composition is skewed to polar residues over residues 1313-1339 (NLSSSSAGSKDTLSCHSMTSLHTSSES) and 1354-1363 (RTGSVKSTLS). Residues 1381 to 1391 (TSHEEGKEWLR) show a composition bias toward basic and acidic residues. A compositionally biased stretch (polar residues) spans 1392-1412 (SHSTGGLQDTGSPLSPPGTTC). Positions 1499–1586 (SSLYSAQIRK…TDAQTAIQVA (88 aa)) form a coiled coil. Disordered regions lie at residues 1602-1672 (QHSS…PSSP), 1756-1792 (NDRLKSSGNTTPAATPAKTARPPSETSSTSSSSSRQS), and 2207-2269 (GYSS…ESAL). Low complexity-rich tracts occupy residues 1605–1623 (SESMSSINSAASHSSLGSA) and 1765–1792 (TTPAATPAKTARPPSETSSTSSSSSRQS). A coiled-coil region spans residues 1697–1765 (CECTEAEAEI…NDRLKSSGNT (69 aa)). Residues 2208–2224 (YSSSKDGAASKQVSQSD) are compositionally biased toward polar residues.

The protein belongs to the Nav/unc-53 family. In terms of assembly, interacts with F-actin.

It localises to the nucleus outer membrane. The protein resides in the golgi apparatus. Its subcellular location is the cell projection. The protein localises to the lamellipodium. It is found in the filopodium. Its function is as follows. Involved in liver and heart organogenesis during embryo development. Plays a role in the migration of hepatoblasts from the intestinal endoderm during liver organogenesis; possibly by modulating actin polymerization during hepatoblast outgrowth. May be involved in neuron regeneration. The sequence is that of Neuron navigator 3 (nav3) from Danio rerio (Zebrafish).